A 275-amino-acid chain; its full sequence is Chlorophyll a-b binding protein 3, chloroplastic (275 aa).

Chlorophyll b is bound at residue Trp58. The chlorophyll a site is built by Phe78, Ser84, and Glu102. Chlorophyll b contacts are provided by Arg107, Ile142, Glu169, and Arg172. Chlorophyll a contacts are provided by Lys226, Glu227, Asn230, Arg232, Gln244, and His259. A helical transmembrane segment spans residues 233-253 (LAMLAILGYFIQGLVTGVGPY).

This sequence belongs to the light-harvesting chlorophyll a/b-binding (LHC) protein family. As to quaternary structure, the LHC complex consists of chlorophyll a-b binding proteins. It depends on Binds at least 14 chlorophylls (8 Chl-a and 6 Chl-b) and carotenoids such as lutein and neoxanthin. as a cofactor. Photoregulated by reversible phosphorylation of its threonine residues.

It is found in the plastid. The protein resides in the chloroplast thylakoid membrane. Functionally, the light-harvesting complex (LHC) functions as a light receptor, it captures and delivers excitation energy to photosystems with which it is closely associated. In terms of biological role, may channel protons produced in the catalytic Mn center of water oxidation into the thylakoid lumen. This is Chlorophyll a-b binding protein 3, chloroplastic from Pisum sativum (Garden pea).